We begin with the raw amino-acid sequence, 667 residues long: Small ribosomal subunit protein mS39 (667 aa).

A mitochondrion-targeting transit peptide spans 1–11 (MASSCSQALRH). Residues 199–226 (EAEQRSEEMEDIQDETQTKKGRSPKASD) form a disordered region. PPR repeat units follow at residues 249–283 (NTRS…RLKA), 284–323 (DVHI…KVKP), 324–360 (NLLT…SIEP), 361–400 (SLAS…SFTP), 482–516 (SSNA…GHGN), and 565–599 (TASS…NRVP).

This sequence belongs to the mitochondrion-specific ribosomal protein mS39 family.

The protein resides in the mitochondrion. Its function is as follows. Mitochondrial RNA-binding protein that may have a role in mitochondrial translation. The protein is Small ribosomal subunit protein mS39 (ptcd3) of Danio rerio (Zebrafish).